The following is a 129-amino-acid chain: uncharacterized protein (129 aa).

This is an uncharacterized protein from Invertebrate iridescent virus 6 (IIV-6).